The following is a 383-amino-acid chain: Probable transcriptional repressor C1348.12 (383 aa).

Residues 34–60 constitute a DNA-binding region (zn(2)-C6 fungal-type); it reads CVICRSKKQKCDGQLPCLYCKKYEYQC.

Its subcellular location is the nucleus. Probable transcriptional repressor of multidrug resistance genes. The polypeptide is Probable transcriptional repressor C1348.12 (Schizosaccharomyces pombe (strain 972 / ATCC 24843) (Fission yeast)).